A 159-amino-acid polypeptide reads, in one-letter code: 2-C-methyl-D-erythritol 2,4-cyclodiphosphate synthase (159 aa).

A divalent metal cation contacts are provided by Asp-8 and His-10. Residues 8 to 10 (DVH) and 34 to 35 (HS) contribute to the 4-CDP-2-C-methyl-D-erythritol 2-phosphate site. A divalent metal cation is bound at residue His-42. 4-CDP-2-C-methyl-D-erythritol 2-phosphate contacts are provided by residues 56–58 (DIG), 61–65 (FPDTD), 100–106 (AQAPKML), 132–135 (TTTE), Phe-139, and Arg-142.

The protein belongs to the IspF family. As to quaternary structure, homotrimer. A divalent metal cation is required as a cofactor.

It catalyses the reaction 4-CDP-2-C-methyl-D-erythritol 2-phosphate = 2-C-methyl-D-erythritol 2,4-cyclic diphosphate + CMP. It participates in isoprenoid biosynthesis; isopentenyl diphosphate biosynthesis via DXP pathway; isopentenyl diphosphate from 1-deoxy-D-xylulose 5-phosphate: step 4/6. In terms of biological role, involved in the biosynthesis of isopentenyl diphosphate (IPP) and dimethylallyl diphosphate (DMAPP), two major building blocks of isoprenoid compounds. Catalyzes the conversion of 4-diphosphocytidyl-2-C-methyl-D-erythritol 2-phosphate (CDP-ME2P) to 2-C-methyl-D-erythritol 2,4-cyclodiphosphate (ME-CPP) with a corresponding release of cytidine 5-monophosphate (CMP). This Escherichia coli O139:H28 (strain E24377A / ETEC) protein is 2-C-methyl-D-erythritol 2,4-cyclodiphosphate synthase.